A 75-amino-acid polypeptide reads, in one-letter code: DNA-directed RNA polymerase subunit omega (75 aa).

This sequence belongs to the RNA polymerase subunit omega family. In terms of assembly, the RNAP catalytic core consists of 2 alpha, 1 beta, 1 beta' and 1 omega subunit. When a sigma factor is associated with the core the holoenzyme is formed, which can initiate transcription.

The catalysed reaction is RNA(n) + a ribonucleoside 5'-triphosphate = RNA(n+1) + diphosphate. Functionally, promotes RNA polymerase assembly. Latches the N- and C-terminal regions of the beta' subunit thereby facilitating its interaction with the beta and alpha subunits. The chain is DNA-directed RNA polymerase subunit omega from Thermosipho melanesiensis (strain DSM 12029 / CIP 104789 / BI429).